We begin with the raw amino-acid sequence, 281 residues long: Transcription factor E2F6 (281 aa).

Residue K9 forms a Glycyl lysine isopeptide (Lys-Gly) (interchain with G-Cter in SUMO2) linkage. Residues 50–129 mediate DNA binding; that stretch reads YVSMRKALKV…SKNHIRWIGS (80 aa). The short motif at 95-129 is the DEF box element; the sequence is KLGVRKRRVYDITNVLDGIDLVEKKSKNHIRWIGS. The tract at residues 130-222 is dimerization; that stretch reads DLSNFGAVPQ…PAPREDSITV (93 aa). Residues 143-164 are leucine-zipper; sequence LQEELSDLSAMEDALDELIKDC. The interval 173-281 is transcription repression; it reads DDKENERLAY…QSEELLEVSN (109 aa). Residues 241–281 form a disordered region; that stretch reads GQTSNKRSEGVGTSSSESTHPEGPEEEENPQQSEELLEVSN.

The protein belongs to the E2F/DP family. Forms heterodimers with DP family members TFDP1 or TFDP2. Component of the DRTF1/E2F transcription factor complex. Part of the E2F6.com-1 complex in G0 phase composed of E2F6, MGA, MAX, TFDP1, CBX3, BAT8, EUHMTASE1, RING1, RNF2, MBLR, L3MBTL2 and YAF2. Component of some MLL1/MLL complex, at least composed of the core components KMT2A/MLL1, ASH2L, HCFC1/HCF1, WDR5 and RBBP5, as well as the facultative components BACC1, CHD8, E2F6, HSP70, INO80C, KANSL1, LAS1L, MAX, MCRS1, MGA, KAT8/MOF, PELP1, PHF20, PRP31, RING2, RUVB1/TIP49A, RUVB2/TIP49B, SENP3, TAF1, TAF4, TAF6, TAF7, TAF9 and TEX10. In terms of tissue distribution, expressed in all tissues examined. Highest levels in placenta, skeletal muscle, heart, ovary, kidney, small intestine and spleen.

Its subcellular location is the nucleus. In terms of biological role, inhibitor of E2F-dependent transcription. Binds DNA cooperatively with DP proteins through the E2 recognition site, 5'-TTTC[CG]CGC-3'. Has a preference for the 5'-TTTCCCGC-3' E2F recognition site. E2F6 lacks the transcriptional activation and pocket protein binding domains. Appears to regulate a subset of E2F-dependent genes whose products are required for entry into the cell cycle but not for normal cell cycle progression. Represses expression of some meiosis-specific genes, including SLC25A31/ANT4. May silence expression via the recruitment of a chromatin remodeling complex containing histone H3-K9 methyltransferase activity. Overexpression delays the exit of cells from the S-phase. The protein is Transcription factor E2F6 of Homo sapiens (Human).